Consider the following 254-residue polypeptide: Probable pectate lyase E (254 aa).

Residues 1-17 (MYQPLLLLPLLLTSAFA) form the signal peptide. An N-linked (GlcNAc...) asparagine glycan is attached at Asn-175. The segment at 227–254 (TDNNDKEPKKKGSGPSNACKYKEPLSKC) is disordered.

Belongs to the polysaccharide lyase 3 family. The cofactor is Ca(2+).

The protein localises to the secreted. The enzyme catalyses Eliminative cleavage of (1-&gt;4)-alpha-D-galacturonan to give oligosaccharides with 4-deoxy-alpha-D-galact-4-enuronosyl groups at their non-reducing ends.. Pectinolytic enzyme consist of four classes of enzymes: pectin lyase, polygalacturonase, pectin methylesterase and rhamnogalacturonase. Among pectinolytic enzymes, pectin lyase is the most important in depolymerization of pectin, since it cleaves internal glycosidic bonds of highly methylated pectins. Favors pectate, the anion, over pectin, the methyl ester. This chain is Probable pectate lyase E (plyE), found in Neosartorya fischeri (strain ATCC 1020 / DSM 3700 / CBS 544.65 / FGSC A1164 / JCM 1740 / NRRL 181 / WB 181) (Aspergillus fischerianus).